A 165-amino-acid chain; its full sequence is 3-isopropylmalate dehydratase small subunit (165 aa).

Belongs to the LeuD family. LeuD type 2 subfamily. As to quaternary structure, heterodimer of LeuC and LeuD.

It carries out the reaction (2R,3S)-3-isopropylmalate = (2S)-2-isopropylmalate. Its pathway is amino-acid biosynthesis; L-leucine biosynthesis; L-leucine from 3-methyl-2-oxobutanoate: step 2/4. Catalyzes the isomerization between 2-isopropylmalate and 3-isopropylmalate, via the formation of 2-isopropylmaleate. This Saccharolobus islandicus (strain M.14.25 / Kamchatka #1) (Sulfolobus islandicus) protein is 3-isopropylmalate dehydratase small subunit.